Reading from the N-terminus, the 225-residue chain is Uracil phosphoribosyltransferase (225 aa).

Lys-36–Arg-40 provides a ligand contact to GTP. 5-phospho-alpha-D-ribose 1-diphosphate-binding positions include Arg-86, Arg-111, and Asp-145 to Thr-153. Uracil is bound by residues Ile-210 and Gly-215–Ala-217. Asp-216 contributes to the 5-phospho-alpha-D-ribose 1-diphosphate binding site.

It belongs to the UPRTase family. It depends on Mg(2+) as a cofactor.

It catalyses the reaction UMP + diphosphate = 5-phospho-alpha-D-ribose 1-diphosphate + uracil. The protein operates within pyrimidine metabolism; UMP biosynthesis via salvage pathway; UMP from uracil: step 1/1. Its activity is regulated as follows. Allosterically activated by GTP. Functionally, catalyzes the conversion of uracil and 5-phospho-alpha-D-ribose 1-diphosphate (PRPP) to UMP and diphosphate. This chain is Uracil phosphoribosyltransferase, found in Haloarcula marismortui (strain ATCC 43049 / DSM 3752 / JCM 8966 / VKM B-1809) (Halobacterium marismortui).